The following is a 128-amino-acid chain: UPF0102 protein Acry_2261 (128 aa).

The protein belongs to the UPF0102 family.

The polypeptide is UPF0102 protein Acry_2261 (Acidiphilium cryptum (strain JF-5)).